Reading from the N-terminus, the 176-residue chain is Macro domain-containing protein lmo2759 (176 aa).

Residues 1–175 enclose the Macro domain; the sequence is MEITIVKGDI…LYNKLINSEV (175 aa).

Belongs to the MacroD-type family.

This is Macro domain-containing protein lmo2759 from Listeria monocytogenes serovar 1/2a (strain ATCC BAA-679 / EGD-e).